Consider the following 374-residue polypeptide: UPF0754 membrane protein SA1664 (374 aa).

Helical transmembrane passes span 4-24 (LFII…TNVI) and 354-374 (SLGF…AIFV).

It belongs to the UPF0754 family.

Its subcellular location is the cell membrane. The protein is UPF0754 membrane protein SA1664 of Staphylococcus aureus (strain N315).